The sequence spans 247 residues: Uridylate kinase (247 aa).

Residue 21 to 24 (KVSG) coordinates ATP. Position 63 (glycine 63) interacts with UMP. ATP-binding residues include glycine 64 and arginine 68. UMP contacts are provided by residues aspartate 83 and 144–151 (TGNPFCTT). The ATP site is built by threonine 171, glutamine 172, tyrosine 177, and aspartate 180.

The protein belongs to the UMP kinase family. As to quaternary structure, homohexamer.

It localises to the cytoplasm. The catalysed reaction is UMP + ATP = UDP + ADP. It functions in the pathway pyrimidine metabolism; CTP biosynthesis via de novo pathway; UDP from UMP (UMPK route): step 1/1. With respect to regulation, inhibited by UTP. Its function is as follows. Catalyzes the reversible phosphorylation of UMP to UDP. The protein is Uridylate kinase of Rickettsia rickettsii (strain Sheila Smith).